The chain runs to 427 residues: Phosphoglucosamine mutase (427 aa).

S94 (phosphoserine intermediate) is an active-site residue. The Mg(2+) site is built by S94, D228, D230, and D232. S94 is subject to Phosphoserine.

The protein belongs to the phosphohexose mutase family. Mg(2+) is required as a cofactor. Post-translationally, activated by phosphorylation.

It carries out the reaction alpha-D-glucosamine 1-phosphate = D-glucosamine 6-phosphate. In terms of biological role, catalyzes the conversion of glucosamine-6-phosphate to glucosamine-1-phosphate. In Thermotoga sp. (strain RQ2), this protein is Phosphoglucosamine mutase.